The following is a 300-amino-acid chain: Hydroxyquinol 1,2-dioxygenase (300 aa).

The Fe cation site is built by Tyr-167, Tyr-200, His-224, and His-226.

The protein belongs to the intradiol ring-cleavage dioxygenase family. Fe(3+) is required as a cofactor.

It catalyses the reaction benzene-1,2,4-triol + O2 = maleylacetate + 2 H(+). The protein operates within aromatic compound metabolism. It functions in the pathway xenobiotic degradation. In terms of biological role, involved in the degradation of para-nitrophenol (4-NP). Catalyzes the conversion of hydroxyquinol to malelylacetate. The polypeptide is Hydroxyquinol 1,2-dioxygenase (npcC) (Rhodococcus opacus (Nocardia opaca)).